The chain runs to 520 residues: Keratin, type II cytoskeletal 78 (520 aa).

The head stretch occupies residues 1 to 110; sequence MSLSPCRAQR…DPQFQVVRTQ (110 aa). Residues 111-146 form a coil 1A region; the sequence is ETQEIRTLNNQFASFIDKVRFLEQQNKVLETKWHLL. An IF rod domain is found at 111-424; the sequence is ETQEIRTLNN…RLLEGEECRM (314 aa). Positions 147–165 are linker 1; sequence QQQGLSGSQQGLEPVFEAC. The coil 1B stretch occupies residues 166 to 258; sequence LDQLRKQLEQ…LNEEELGQLQ (93 aa). A linker 12 region spans residues 259–281; it reads TQASDTSVVLSMDNNRYLDFSSI. Residues 282–421 form a coil 2 region; it reads ITEVRARYEE…TYRRLLEGEE (140 aa). Residues 422-520 form a tail region; the sequence is CRMSGECTSQ…ESSLKTSITY (99 aa).

It belongs to the intermediate filament family. Heterotetramer of two type I and two type II keratins. In terms of tissue distribution, in non-keratinising esophageal and vaginal epithelium, strongly expressed in the basal and parabasal/lower suprabasal cell layers with considerably decreased expression in the mid/upper suprabasal layers (at protein level). A similar gradient from basal to lower suprabasal layers is seen in the partially keratinised dorsal tongue epithelium, in the scalp and in the plantar epidermis (at protein level). Extension of expression into the suprabasal compartments is distinctly more pronounced in non-keratinising epithelia than in keratinising epithelia and epidermis (at protein level). In scalp sections, present in the interfollicular epidermis and infundibulum including the entire outer root sheath of the hair follicles and also in the sebocytes (at protein level). In sweat glands, expressed in peripheral and luminal cells of the lower duct and in peripheral cells of the middle/upper duct with no expression observed in luminal cells (at protein level). In embryos at the 14th week of pregnancy, detected in basal and parabasal layers but is absent from the uppermost epidermal layer (at protein level). Expressed in tongue epithelium.

The sequence is that of Keratin, type II cytoskeletal 78 (KRT78) from Homo sapiens (Human).